The following is a 229-amino-acid chain: Uracil-DNA glycosylase (229 aa).

The Proton acceptor role is filled by D64.

It belongs to the uracil-DNA glycosylase (UDG) superfamily. UNG family.

The protein localises to the cytoplasm. The enzyme catalyses Hydrolyzes single-stranded DNA or mismatched double-stranded DNA and polynucleotides, releasing free uracil.. Its function is as follows. Excises uracil residues from the DNA which can arise as a result of misincorporation of dUMP residues by DNA polymerase or due to deamination of cytosine. In Klebsiella pneumoniae (strain 342), this protein is Uracil-DNA glycosylase.